The primary structure comprises 193 residues: Probable type II restriction enzyme HpyAORF263P (193 aa).

The protein belongs to the BsaWI type II restriction endonuclease family.

The enzyme catalyses Endonucleolytic cleavage of DNA to give specific double-stranded fragments with terminal 5'-phosphates.. Its function is as follows. A P subtype probable restriction enzyme that recognizes the double-stranded sequence CCGG; the cleavage site is unknown. This Helicobacter pylori (strain ATCC 700392 / 26695) (Campylobacter pylori) protein is Probable type II restriction enzyme HpyAORF263P.